The chain runs to 462 residues: tRNA-2-methylthio-N(6)-dimethylallyladenosine synthase (462 aa).

The MTTase N-terminal domain maps to Met-1–Ala-116. Positions 10, 47, 79, 148, 152, and 155 each coordinate [4Fe-4S] cluster. The 237-residue stretch at Gln-134–Lys-370 folds into the Radical SAM core domain. The TRAM domain occupies Gln-372–Asn-436.

This sequence belongs to the methylthiotransferase family. MiaB subfamily. In terms of assembly, monomer. [4Fe-4S] cluster serves as cofactor.

Its subcellular location is the cytoplasm. The enzyme catalyses N(6)-dimethylallyladenosine(37) in tRNA + (sulfur carrier)-SH + AH2 + 2 S-adenosyl-L-methionine = 2-methylsulfanyl-N(6)-dimethylallyladenosine(37) in tRNA + (sulfur carrier)-H + 5'-deoxyadenosine + L-methionine + A + S-adenosyl-L-homocysteine + 2 H(+). Its function is as follows. Catalyzes the methylthiolation of N6-(dimethylallyl)adenosine (i(6)A), leading to the formation of 2-methylthio-N6-(dimethylallyl)adenosine (ms(2)i(6)A) at position 37 in tRNAs that read codons beginning with uridine. The protein is tRNA-2-methylthio-N(6)-dimethylallyladenosine synthase of Helicobacter hepaticus (strain ATCC 51449 / 3B1).